A 1099-amino-acid polypeptide reads, in one-letter code: Carbamoyl phosphate synthase large chain (1099 aa).

The interval 1–402 is carboxyphosphate synthetic domain; it reads MPKRTDLKSV…ALQKALRSLE (402 aa). Residues Arg129, Arg169, Gly175, Gly176, Glu208, Ile210, Glu215, Gly241, Val242, His243, Gln285, and Glu299 each coordinate ATP. Residues 133–328 form the ATP-grasp 1 domain; it reads KGVVERCGAE…IAKIATKLSL (196 aa). Mg(2+) contacts are provided by Gln285, Glu299, and Asn301. 3 residues coordinate Mn(2+): Gln285, Glu299, and Asn301. Positions 403–546 are oligomerization domain; the sequence is QKGSQLDFSH…YHYSSYDEED (144 aa). The interval 547–950 is carbamoyl phosphate synthetic domain; sequence EVALHSKPSI…AFAKSQAAAN (404 aa). Residues 677–868 form the ATP-grasp 2 domain; it reads SRVLDEAGLI…MAKAAALIGT (192 aa). ATP-binding residues include Arg713, Arg752, Leu754, Glu759, Gly784, Ile785, His786, Ser787, Gln827, and Glu839. The Mg(2+) site is built by Gln827, Glu839, and Asn841. Gln827, Glu839, and Asn841 together coordinate Mn(2+). The MGS-like domain occupies 951–1099; it reads NALPTEGKIF…AENLKALQNG (149 aa). The tract at residues 951–1099 is allosteric domain; the sequence is NALPTEGKIF…AENLKALQNG (149 aa).

Belongs to the CarB family. Composed of two chains; the small (or glutamine) chain promotes the hydrolysis of glutamine to ammonia, which is used by the large (or ammonia) chain to synthesize carbamoyl phosphate. Tetramer of heterodimers (alpha,beta)4. Mg(2+) is required as a cofactor. Mn(2+) serves as cofactor.

It carries out the reaction hydrogencarbonate + L-glutamine + 2 ATP + H2O = carbamoyl phosphate + L-glutamate + 2 ADP + phosphate + 2 H(+). The catalysed reaction is hydrogencarbonate + NH4(+) + 2 ATP = carbamoyl phosphate + 2 ADP + phosphate + 2 H(+). It participates in amino-acid biosynthesis; L-arginine biosynthesis; carbamoyl phosphate from bicarbonate: step 1/1. Its pathway is pyrimidine metabolism; UMP biosynthesis via de novo pathway; (S)-dihydroorotate from bicarbonate: step 1/3. In terms of biological role, large subunit of the glutamine-dependent carbamoyl phosphate synthetase (CPSase). CPSase catalyzes the formation of carbamoyl phosphate from the ammonia moiety of glutamine, carbonate, and phosphate donated by ATP, constituting the first step of 2 biosynthetic pathways, one leading to arginine and/or urea and the other to pyrimidine nucleotides. The large subunit (synthetase) binds the substrates ammonia (free or transferred from glutamine from the small subunit), hydrogencarbonate and ATP and carries out an ATP-coupled ligase reaction, activating hydrogencarbonate by forming carboxy phosphate which reacts with ammonia to form carbamoyl phosphate. The protein is Carbamoyl phosphate synthase large chain of Arthrobacter sp. (strain FB24).